A 143-amino-acid polypeptide reads, in one-letter code: Large ribosomal subunit protein uL11 (143 aa).

It belongs to the universal ribosomal protein uL11 family. Part of the ribosomal stalk of the 50S ribosomal subunit. Interacts with L10 and the large rRNA to form the base of the stalk. L10 forms an elongated spine to which L12 dimers bind in a sequential fashion forming a multimeric L10(L12)X complex. One or more lysine residues are methylated.

Its function is as follows. Forms part of the ribosomal stalk which helps the ribosome interact with GTP-bound translation factors. This chain is Large ribosomal subunit protein uL11, found in Cupriavidus metallidurans (strain ATCC 43123 / DSM 2839 / NBRC 102507 / CH34) (Ralstonia metallidurans).